Here is an 88-residue protein sequence, read N- to C-terminus: Large ribosomal subunit protein eL37 (88 aa).

Zn(2+)-binding residues include C17, C20, C32, and C35. The segment at 17–35 (CNRCGRRSFHVQKKTCSSC) adopts a C4-type zinc-finger fold.

This sequence belongs to the eukaryotic ribosomal protein eL37 family. Zn(2+) serves as cofactor.

In terms of biological role, binds to the 23S rRNA. In Candida albicans (Yeast), this protein is Large ribosomal subunit protein eL37 (RPL37).